Reading from the N-terminus, the 549-residue chain is Glucose-6-phosphate isomerase (549 aa).

The Proton donor role is filled by glutamate 352. Active-site residues include histidine 383 and lysine 511.

Belongs to the GPI family.

The protein resides in the cytoplasm. The catalysed reaction is alpha-D-glucose 6-phosphate = beta-D-fructose 6-phosphate. It functions in the pathway carbohydrate biosynthesis; gluconeogenesis. The protein operates within carbohydrate degradation; glycolysis; D-glyceraldehyde 3-phosphate and glycerone phosphate from D-glucose: step 2/4. Functionally, catalyzes the reversible isomerization of glucose-6-phosphate to fructose-6-phosphate. This Methylocella silvestris (strain DSM 15510 / CIP 108128 / LMG 27833 / NCIMB 13906 / BL2) protein is Glucose-6-phosphate isomerase.